We begin with the raw amino-acid sequence, 142 residues long: Nitrogen fixation protein NifU 2 (142 aa).

The interval 1-36 (MKDLFDESLTLDTGSAAPGTAPGRPRRRQPAGGKAP) is disordered. Positions 14–23 (GSAAPGTAPG) are enriched in low complexity.

Belongs to the NifU family.

Functionally, may be involved in the formation or repair of [Fe-S] clusters present in iron-sulfur proteins. This is Nitrogen fixation protein NifU 2 (nifU2) from Rhodobacter capsulatus (Rhodopseudomonas capsulata).